Reading from the N-terminus, the 277-residue chain is MNPCSTPSLYGVIGYPLGHSLSPLLHNTAFRELGIPGVLLPWSIEPERLPAFIQSVRLLNIRGACVTIPHKQSIIPLLDRVTDRVKALGAANTLYWDGDLLCGDNTDILGFMSPLQADPPSAEQTRVLVLGAGGVARAAVAGLKSLGLNQITITDIVDASSATLAETFDLKTIPWSQRSEVDAHILINTTPLGMKGKFEEESPYPTEALAARQGIAYDIVYTPFVTRFLREARAAGWKTIGGLEMFISQADHQFLTWTGRNLPQAAKQAVIDALTAT.

Shikimate contacts are provided by residues 20–22 (SLS) and T67. The Proton acceptor role is filled by K71. D83 is an NADP(+) binding site. Residues N92 and D107 each coordinate shikimate. NADP(+) is bound by residues 131-135 (GAGGV) and I219. Y221 contacts shikimate. G242 provides a ligand contact to NADP(+).

It belongs to the shikimate dehydrogenase family. In terms of assembly, homodimer.

The enzyme catalyses shikimate + NADP(+) = 3-dehydroshikimate + NADPH + H(+). It functions in the pathway metabolic intermediate biosynthesis; chorismate biosynthesis; chorismate from D-erythrose 4-phosphate and phosphoenolpyruvate: step 4/7. Functionally, involved in the biosynthesis of the chorismate, which leads to the biosynthesis of aromatic amino acids. Catalyzes the reversible NADPH linked reduction of 3-dehydroshikimate (DHSA) to yield shikimate (SA). This is Shikimate dehydrogenase (NADP(+)) from Pelobacter propionicus (strain DSM 2379 / NBRC 103807 / OttBd1).